Reading from the N-terminus, the 778-residue chain is Serine/threonine-protein kinase BRSK1 (778 aa).

Over residues 1–12 the composition is skewed to gly residues; it reads MSSGSKEGGGGS. The interval 1 to 29 is disordered; the sequence is MSSGSKEGGGGSPAYHLPHPHPHPPQHAQ. The Protein kinase domain occupies 34–285; it reads YRLEKTLGKG…LEQIQKHPWY (252 aa). ATP-binding positions include 40 to 48 and Lys63; that span reads LGKGQTGLV. Residue Asp156 is the Proton acceptor of the active site. Thr189 carries the post-translational modification Phosphothreonine; by LKB1. Ser193 carries the phosphoserine modification. A UBA domain is found at 314–356; sequence ELDPDVLESMASLGCFRDRERLHRELRSEEENQEKMIYYLLLD. The span at 362–383 shows a compositional bias: basic and acidic residues; that stretch reads PSCEDQDLPPRNDVDPPRKRVD. Residues 362 to 548 form a disordered region; it reads PSCEDQDLPP…SPGGGVGGAA (187 aa). Phosphoserine occurs at positions 399, 443, 447, and 450. Residues 430–457 are compositionally biased toward low complexity; the sequence is SRSVSGASTGLSSSPLSSPRSPVFSFSP. Arg466, Arg481, Arg484, and Arg498 each carry omega-N-methylarginine. The segment covering 491–508 has biased composition (pro residues); sequence QPPPPSARSTPLPGPPGS. The residue at position 508 (Ser508) is a Phosphoserine. Over residues 509–533 the composition is skewed to low complexity; the sequence is PRSSGGTPLHSPLHTPRASPTGTPG. Arg525 carries the post-translational modification Omega-N-methylarginine. A phosphothreonine mark is found at Thr529 and Thr535. Arg550 carries the post-translational modification Omega-N-methylarginine. Thr583 bears the Phosphothreonine mark. 3 positions are modified to phosphoserine: Ser586, Ser587, and Ser601. The interval 719–778 is disordered; the sequence is QPSVQALADEKNGAQTRPAGTPPRSLQPPPGRPDPDLSSSPRRGPSKDKKLLATNGTPLP.

Belongs to the protein kinase superfamily. CAMK Ser/Thr protein kinase family. SNF1 subfamily. It depends on Mg(2+) as a cofactor. Phosphorylated at Thr-189 by STK11/LKB1 in complex with STE20-related adapter-alpha (STRADA) pseudo kinase and CAB39. Not phosphorylated at Thr-189 by CaMKK2. In contrast, it is phosphorylated and activated by CaMKK1. May be inactivated via dephosphorylation of Thr-189 by PP2C. May be autophosphorylated. Mainly present in brain. Present in presynaptic nerve terminals (at protein level).

It localises to the cytoplasm. It is found in the nucleus. Its subcellular location is the cytoskeleton. The protein localises to the microtubule organizing center. The protein resides in the centrosome. It localises to the synapse. It is found in the presynaptic active zone. Its subcellular location is the cytoplasmic vesicle. The protein localises to the secretory vesicle. The protein resides in the synaptic vesicle. It carries out the reaction L-seryl-[protein] + ATP = O-phospho-L-seryl-[protein] + ADP + H(+). The catalysed reaction is L-threonyl-[protein] + ATP = O-phospho-L-threonyl-[protein] + ADP + H(+). The enzyme catalyses L-seryl-[tau protein] + ATP = O-phospho-L-seryl-[tau protein] + ADP + H(+). It catalyses the reaction L-threonyl-[tau protein] + ATP = O-phospho-L-threonyl-[tau protein] + ADP + H(+). Its activity is regulated as follows. Activated by phosphorylation on Thr-189 by STK11/LKB1. Functionally, serine/threonine-protein kinase that plays a key role in polarization of neurons and centrosome duplication. Phosphorylates CDC25B, CDC25C, MAPT/TAU, RIMS1, TUBG1, TUBG2 and WEE1. Following phosphorylation and activation by STK11/LKB1, acts as a key regulator of polarization of cortical neurons, probably by mediating phosphorylation of microtubule-associated proteins such as MAPT/TAU at 'Thr-523' and 'Ser-573'. Also regulates neuron polarization by mediating phosphorylation of WEE1 at 'Ser-642' in postmitotic neurons, leading to down-regulate WEE1 activity in polarized neurons. Also acts as a positive regulator of centrosome duplication by mediating phosphorylation of gamma-tubulin (TUBG1 and TUBG2) at 'Ser-131', leading to translocation of gamma-tubulin and its associated proteins to the centrosome. Involved in the UV-induced DNA damage checkpoint response, probably by inhibiting CDK1 activity through phosphorylation and activation of WEE1, and inhibition of CDC25B and CDC25C. In neurons, localizes to synaptic vesicles and plays a role in neurotransmitter release, possibly by phosphorylating RIMS1. In Rattus norvegicus (Rat), this protein is Serine/threonine-protein kinase BRSK1 (Brsk1).